Here is a 295-residue protein sequence, read N- to C-terminus: Protease HtpX (295 aa).

2 consecutive transmembrane segments (helical) span residues 4–24 (ILLFLATNLAVVLIASITLSL) and 42–62 (QLLVFCAVFGFAGSLFSLFIS). Zn(2+) is bound at residue H147. Residue E148 is part of the active site. H151 provides a ligand contact to Zn(2+). The next 2 membrane-spanning stretches (helical) occupy residues 158 to 178 (VTLALVQGVVNTFVMFFARII) and 195 to 215 (IAYFVATIFAEVVLGFLASAI). Residue E224 participates in Zn(2+) binding.

Belongs to the peptidase M48B family. Zn(2+) is required as a cofactor.

The protein localises to the cell inner membrane. The protein is Protease HtpX of Pseudomonas fluorescens (strain SBW25).